Consider the following 156-residue polypeptide: MKLFILAVGHKMPGWIASGFDEYAKRMPPELRIELREIKPELRSGGRSAESVMAAERQKIDAALPKGARIVALDERGRDWTTMQLAQALPGWQQDGRDVAFVIGGADGLDPELKARADLLLRISSMTLPHGMVRVLLAEQLYRAWSITQNHPYHRA.

S-adenosyl-L-methionine-binding positions include L73, G104, and 123 to 128 (ISSMTL).

This sequence belongs to the RNA methyltransferase RlmH family. As to quaternary structure, homodimer.

It localises to the cytoplasm. It carries out the reaction pseudouridine(1915) in 23S rRNA + S-adenosyl-L-methionine = N(3)-methylpseudouridine(1915) in 23S rRNA + S-adenosyl-L-homocysteine + H(+). Specifically methylates the pseudouridine at position 1915 (m3Psi1915) in 23S rRNA. This chain is Ribosomal RNA large subunit methyltransferase H, found in Burkholderia multivorans (strain ATCC 17616 / 249).